The sequence spans 430 residues: Shufflon protein A' (430 aa).

The tract at residues 1 to 361 (MKKYDRGWAS…TGAILSCQSG (361 aa)) is constant region. Positions 362 to 430 (TWGTIGGKLK…GCIASCVTLN (69 aa)) are variable region.

The sequence is that of Shufflon protein A' from Escherichia coli.